We begin with the raw amino-acid sequence, 318 residues long: NADH-ubiquinone oxidoreductase chain 1 (318 aa).

The next 8 membrane-spanning stretches (helical) occupy residues 2–22 (FMAN…FLTL), 69–89 (MLYL…WTPL), 98–118 (FNLG…SILW), 140–160 (ISYE…SGSF), 171–191 (HSWL…STLA), 222–242 (LFFM…TTIF), 253–273 (ETYS…FLWI), and 285–305 (LMHL…MWYI).

It belongs to the complex I subunit 1 family. In terms of assembly, core subunit of respiratory chain NADH dehydrogenase (Complex I) which is composed of 45 different subunits.

Its subcellular location is the mitochondrion inner membrane. The enzyme catalyses a ubiquinone + NADH + 5 H(+)(in) = a ubiquinol + NAD(+) + 4 H(+)(out). In terms of biological role, core subunit of the mitochondrial membrane respiratory chain NADH dehydrogenase (Complex I) which catalyzes electron transfer from NADH through the respiratory chain, using ubiquinone as an electron acceptor. Essential for the catalytic activity and assembly of complex I. The sequence is that of NADH-ubiquinone oxidoreductase chain 1 (MT-ND1) from Saguinus leucopus (Silvery-brown bare-face tamarin).